The chain runs to 411 residues: Arginine deiminase (411 aa).

Catalysis depends on Cys401, which acts as the Amidino-cysteine intermediate.

This sequence belongs to the arginine deiminase family.

It is found in the cytoplasm. It catalyses the reaction L-arginine + H2O = L-citrulline + NH4(+). It participates in amino-acid degradation; L-arginine degradation via ADI pathway; carbamoyl phosphate from L-arginine: step 1/2. This Staphylococcus haemolyticus (strain JCSC1435) protein is Arginine deiminase.